The following is a 147-amino-acid chain: Large ribosomal subunit protein uL13 (147 aa).

This sequence belongs to the universal ribosomal protein uL13 family. As to quaternary structure, part of the 50S ribosomal subunit.

Functionally, this protein is one of the early assembly proteins of the 50S ribosomal subunit, although it is not seen to bind rRNA by itself. It is important during the early stages of 50S assembly. In Limosilactobacillus fermentum (strain NBRC 3956 / LMG 18251) (Lactobacillus fermentum), this protein is Large ribosomal subunit protein uL13.